We begin with the raw amino-acid sequence, 111 residues long: Translation initiation factor 1A (111 aa).

Residues 12-86 (GEMPLPSEDE…KKGEVVYRYL (75 aa)) enclose the S1-like domain.

It belongs to the eIF-1A family.

Functionally, seems to be required for maximal rate of protein biosynthesis. Enhances ribosome dissociation into subunits and stabilizes the binding of the initiator Met-tRNA(I) to 40 S ribosomal subunits. In Aeropyrum pernix (strain ATCC 700893 / DSM 11879 / JCM 9820 / NBRC 100138 / K1), this protein is Translation initiation factor 1A (eIF1A).